Here is a 212-residue protein sequence, read N- to C-terminus: External core antigen (212 aa).

The signal sequence occupies residues 1 to 19 (MQLFHLCLIISCSCPTVQA). Residues 25 to 27 (GWL) are HBEAG. Residues 165–212 (NAPILSTLPETTVVRRRGRSPRRRTPSPRRRRSQSPRRRRSQSRESQC) form a disordered region. A compositionally biased stretch (basic residues) spans 178–205 (VRRRGRSPRRRTPSPRRRRSQSPRRRRS). One copy of the 1; half-length repeat lies at 184-190 (SPRRRTP). The interval 184–206 (SPRRRTPSPRRRRSQSPRRRRSQ) is 3 X 8 AA repeats of S-P-R-R-R-R-S-Q. The propeptide occupies 184-212 (SPRRRTPSPRRRRSQSPRRRRSQSRESQC). A run of 2 repeats spans residues 191-198 (SPRRRRSQ) and 199-206 (SPRRRRSQ).

This sequence belongs to the orthohepadnavirus precore antigen family. In terms of assembly, homodimerizes. Phosphorylated. Post-translationally, cleaved by host furin.

The protein resides in the secreted. Its subcellular location is the host nucleus. Its function is as follows. May regulate immune response to the intracellular capsid in acting as a T-cell tolerogen, by having an immunoregulatory effect which prevents destruction of infected cells by cytotoxic T-cells. This immune regulation may predispose to chronicity during perinatal infections and prevent severe liver injury during adult infections. In Hepatitis B virus genotype B2 (isolate Indonesia/pIDW420/1988) (HBV-B), this protein is External core antigen.